Reading from the N-terminus, the 299-residue chain is Cycloserine biosynthesis protein DcsG (299 aa).

The ATP site is built by Lys-92, Lys-137, Ser-144, Gln-175, Pro-176, and Val-178. Residues 95 to 298 (LADLAAHGVP…FAQALAERLK (204 aa)) enclose the ATP-grasp domain. Residues Arg-220 and Arg-254 contribute to the active site. 2 residues coordinate Mg(2+): Glu-269 and Glu-271. Glu-271 is a catalytic residue.

In terms of assembly, monomer. Requires Mg(2+) as cofactor.

It carries out the reaction O-ureido-D-serine + ATP + H2O + H(+) = D-cycloserine + NH4(+) + ADP + phosphate + CO2. Involved in the biosynthesis of the antibiotic D-cycloserine (DCS), a cyclic structural analog of D-alanine, used as an antitubercular agent. Catalyzes the synthesis of D-cycloserine from O-ureido-D-serine (D-OUS). It reacts with D-OUS, D-homocysteine and beta-aminooxy-D-alanine. This is Cycloserine biosynthesis protein DcsG from Streptomyces lavendulae.